The sequence spans 74 residues: Anaphase-promoting complex subunit 13 (74 aa).

Residues 33 to 53 (LNELPDPEQDNGGTTESVKEQ) are disordered.

It belongs to the APC13 family. The mammalian APC/C is composed at least of 14 distinct subunits ANAPC1, ANAPC2, CDC27/APC3, ANAPC4, ANAPC5, CDC16/APC6, ANAPC7, CDC23/APC8, ANAPC10, ANAPC11, CDC26/APC12, ANAPC13, ANAPC15 and ANAPC16 that assemble into a complex of at least 19 chains with a combined molecular mass of around 1.2 MDa; APC/C interacts with FZR1 and FBXO5.

Its subcellular location is the nucleus. It functions in the pathway protein modification; protein ubiquitination. Its function is as follows. Component of the anaphase promoting complex/cyclosome (APC/C), a cell cycle-regulated E3 ubiquitin ligase that controls progression through mitosis and the G1 phase of the cell cycle. The APC/C complex acts by mediating ubiquitination and subsequent degradation of target proteins: it mainly mediates the formation of 'Lys-11'-linked polyubiquitin chains and, to a lower extent, the formation of 'Lys-48'- and 'Lys-63'-linked polyubiquitin chains. The APC/C complex catalyzes assembly of branched 'Lys-11'-/'Lys-48'-linked branched ubiquitin chains on target proteins. This chain is Anaphase-promoting complex subunit 13 (ANAPC13), found in Pongo abelii (Sumatran orangutan).